The sequence spans 145 residues: MESKEELRQRIGDLAFEVTQHAATERAFTGQYDDFFEKGIYVDVVSGEVLFSSLDKFNSGCGWPAFSRPIHHRMVTNHHDSSHGMRRVEVKSREAGSHLGHVFNDGPREAGGLRYCINSAALKFIPYDQMEQEGYAEWLGIFDKS.

The region spanning 4–127 (KEELRQRIGD…NSAALKFIPY (124 aa)) is the MsrB domain. The active-site Nucleophile is the Cys116.

Belongs to the MsrB Met sulfoxide reductase family.

The catalysed reaction is L-methionyl-[protein] + [thioredoxin]-disulfide + H2O = L-methionyl-(R)-S-oxide-[protein] + [thioredoxin]-dithiol. This Streptococcus equi subsp. zooepidemicus (strain H70) protein is Peptide methionine sulfoxide reductase MsrB.